A 903-amino-acid chain; its full sequence is Protein translocase subunit SecA (903 aa).

Residues Q87, 105-109, and D507 each bind ATP; that span reads GEGKT. The disordered stretch occupies residues 854–893; sequence STMADSSGDVKSSTAESKAPYVRDGRKVGRNEPCPCGSGK. A compositionally biased stretch (polar residues) spans 856–869; that stretch reads MADSSGDVKSSTAE. Basic and acidic residues predominate over residues 874–883; it reads YVRDGRKVGR. Residues C887, C889, C898, and H899 each contribute to the Zn(2+) site.

It belongs to the SecA family. As to quaternary structure, monomer and homodimer. Part of the essential Sec protein translocation apparatus which comprises SecA, SecYEG and auxiliary proteins SecDF-YajC and YidC. Requires Zn(2+) as cofactor.

The protein localises to the cell inner membrane. Its subcellular location is the cytoplasm. The enzyme catalyses ATP + H2O + cellular proteinSide 1 = ADP + phosphate + cellular proteinSide 2.. Functionally, part of the Sec protein translocase complex. Interacts with the SecYEG preprotein conducting channel. Has a central role in coupling the hydrolysis of ATP to the transfer of proteins into and across the cell membrane, serving both as a receptor for the preprotein-SecB complex and as an ATP-driven molecular motor driving the stepwise translocation of polypeptide chains across the membrane. The chain is Protein translocase subunit SecA from Nitrosococcus oceani (strain ATCC 19707 / BCRC 17464 / JCM 30415 / NCIMB 11848 / C-107).